A 134-amino-acid polypeptide reads, in one-letter code: Small ribosomal subunit protein uS8c (134 aa).

The protein belongs to the universal ribosomal protein uS8 family. In terms of assembly, part of the 30S ribosomal subunit.

It is found in the plastid. The protein localises to the chloroplast. One of the primary rRNA binding proteins, it binds directly to 16S rRNA central domain where it helps coordinate assembly of the platform of the 30S subunit. The chain is Small ribosomal subunit protein uS8c (rps8) from Aethionema grandiflorum (Persian stone-cress).